Consider the following 194-residue polypeptide: uncharacterized protein (194 aa).

This is an uncharacterized protein from Gallus gallus (Chicken).